Reading from the N-terminus, the 328-residue chain is 3-dehydroquinate synthase (328 aa).

It belongs to the archaeal-type DHQ synthase family.

It carries out the reaction 2-amino-2,3,7-trideoxy-D-lyxo-hept-6-ulosonate + NAD(+) + H2O = 3-dehydroquinate + NH4(+) + NADH + H(+). Its function is as follows. Catalyzes the oxidative deamination and cyclization of 2-amino-3,7-dideoxy-D-threo-hept-6-ulosonic acid (ADH) to yield 3-dehydroquinate (DHQ), which is fed into the canonical shikimic pathway of aromatic amino acid biosynthesis. The protein is 3-dehydroquinate synthase of Methanoculleus marisnigri (strain ATCC 35101 / DSM 1498 / JR1).